The following is a 556-amino-acid chain: 2-succinyl-5-enolpyruvyl-6-hydroxy-3-cyclohexene-1-carboxylate synthase (556 aa).

The protein belongs to the TPP enzyme family. MenD subfamily. As to quaternary structure, homodimer. Mg(2+) is required as a cofactor. The cofactor is Mn(2+). It depends on thiamine diphosphate as a cofactor.

The catalysed reaction is isochorismate + 2-oxoglutarate + H(+) = 5-enolpyruvoyl-6-hydroxy-2-succinyl-cyclohex-3-ene-1-carboxylate + CO2. Its pathway is quinol/quinone metabolism; 1,4-dihydroxy-2-naphthoate biosynthesis; 1,4-dihydroxy-2-naphthoate from chorismate: step 2/7. The protein operates within quinol/quinone metabolism; menaquinone biosynthesis. Functionally, catalyzes the thiamine diphosphate-dependent decarboxylation of 2-oxoglutarate and the subsequent addition of the resulting succinic semialdehyde-thiamine pyrophosphate anion to isochorismate to yield 2-succinyl-5-enolpyruvyl-6-hydroxy-3-cyclohexene-1-carboxylate (SEPHCHC). In Escherichia coli O7:K1 (strain IAI39 / ExPEC), this protein is 2-succinyl-5-enolpyruvyl-6-hydroxy-3-cyclohexene-1-carboxylate synthase.